Reading from the N-terminus, the 651-residue chain is Gag-Pro polyprotein (651 aa).

Residue G2 is the site of N-myristoyl glycine; by host attachment. A disordered region spans residues 93-143; that stretch reads QIPSHPAPPPPSSPTHDPPDSDPQIPPPYVEPTAPQVLPVMHPHGVPPTHR. The residue at position 105 (S105) is a Phosphoserine; by host MAPK1. Positions 118–121 match the PPXY motif motif; the sequence is PPPY. The short motif at 124–127 is the PTAP/PSAP motif element; sequence PTAP. CCHC-type zinc fingers lie at residues 355-372 and 378-395; these read QPCF…DCAQ and GPCP…DCPR. The Peptidase A2 domain maps to 476–554; that stretch reads IEALLDTGAD…NNWAIIGRDA (79 aa). D481 functions as the For protease activity; shared with dimeric partner in the catalytic mechanism. A disordered region spans residues 632-651; that stretch reads QLKRPMEPGDSSTTCGPLIL. The segment covering 641–651 has biased composition (polar residues); that stretch reads DSSTTCGPLIL.

As to quaternary structure, homodimer; the homodimers are part of the immature particles. Interacts with human TSG101 and NEDD4; these interactions are essential for budding and release of viral particles. In terms of assembly, homodimer; further assembles as homohexamers. In terms of processing, specific enzymatic cleavages by the viral protease yield mature proteins. The polyprotein is cleaved during and after budding, this process is termed maturation. The protease is autoproteolytically processed at its N- and C-termini. Post-translationally, phosphorylation of the matrix protein p19 by MAPK1 seems to play a role in budding. Myristoylated. Myristoylation of the matrix (MA) domain mediates the transport and binding of Gag polyproteins to the host plasma membrane and is required for the assembly of viral particles.

It localises to the virion. Its function is as follows. The matrix domain targets Gag, Gag-Pro and Gag-Pro-Pol polyproteins to the plasma membrane via a multipartite membrane binding signal, that includes its myristoylated N-terminus. In terms of biological role, matrix protein. Functionally, forms the spherical core of the virus that encapsulates the genomic RNA-nucleocapsid complex. Binds strongly to viral nucleic acids and promote their aggregation. Also destabilizes the nucleic acids duplexes via highly structured zinc-binding motifs. Its function is as follows. The aspartyl protease mediates proteolytic cleavages of Gag and Gag-Pol polyproteins during or shortly after the release of the virion from the plasma membrane. Cleavages take place as an ordered, step-wise cascade to yield mature proteins. This process is called maturation. Displays maximal activity during the budding process just prior to particle release from the cell (Potential). Cleaves the translation initiation factor eIF4G leading to the inhibition of host cap-dependent translation. This Human T-cell leukemia virus 1 (isolate Melanesia mel5 subtype C) (HTLV-1) protein is Gag-Pro polyprotein (gag-pro).